A 454-amino-acid polypeptide reads, in one-letter code: Tubulin alpha chain (454 aa).

Positions 12, 72, 141, 145, 146, 180, 207, and 229 each coordinate GTP. Residue Asp72 participates in Mg(2+) binding. Glu255 is an active-site residue.

This sequence belongs to the tubulin family. Dimer of alpha and beta chains. A typical microtubule is a hollow water-filled tube with an outer diameter of 25 nm and an inner diameter of 15 nM. Alpha-beta heterodimers associate head-to-tail to form protofilaments running lengthwise along the microtubule wall with the beta-tubulin subunit facing the microtubule plus end conferring a structural polarity. Microtubules usually have 13 protofilaments but different protofilament numbers can be found in some organisms and specialized cells. It depends on Mg(2+) as a cofactor.

It is found in the cytoplasm. The protein resides in the cytoskeleton. It catalyses the reaction GTP + H2O = GDP + phosphate + H(+). Functionally, tubulin is the major constituent of microtubules, a cylinder consisting of laterally associated linear protofilaments composed of alpha- and beta-tubulin heterodimers. Microtubules grow by the addition of GTP-tubulin dimers to the microtubule end, where a stabilizing cap forms. Below the cap, tubulin dimers are in GDP-bound state, owing to GTPase activity of alpha-tubulin. This chain is Tubulin alpha chain (TUB1), found in Colletotrichum orbiculare (strain 104-T / ATCC 96160 / CBS 514.97 / LARS 414 / MAFF 240422) (Cucumber anthracnose fungus).